The sequence spans 433 residues: Amino-acid acetyltransferase (433 aa).

The N-acetyltransferase domain occupies 287-426 (ELVREAAIED…ASLYNYQRNS (140 aa)).

It belongs to the acetyltransferase family. ArgA subfamily.

It is found in the cytoplasm. The enzyme catalyses L-glutamate + acetyl-CoA = N-acetyl-L-glutamate + CoA + H(+). The protein operates within amino-acid biosynthesis; L-arginine biosynthesis; N(2)-acetyl-L-ornithine from L-glutamate: step 1/4. The sequence is that of Amino-acid acetyltransferase from Pseudomonas fluorescens (strain SBW25).